We begin with the raw amino-acid sequence, 303 residues long: Probable cell division protein WhiA (303 aa).

The segment at residues 272–303 (SIQQVADALEFPITKSGVNHRLRKINKIADDL) is a DNA-binding region (H-T-H motif).

Belongs to the WhiA family.

Functionally, involved in cell division and chromosome segregation. The sequence is that of Probable cell division protein WhiA from Streptococcus pyogenes serotype M3 (strain ATCC BAA-595 / MGAS315).